The sequence spans 184 residues: Ribosome-recycling factor (184 aa).

A disordered region spans residues 133-153 (DSNDELKKQQKNSDITEDDLR).

The protein belongs to the RRF family.

Its subcellular location is the cytoplasm. Responsible for the release of ribosomes from messenger RNA at the termination of protein biosynthesis. May increase the efficiency of translation by recycling ribosomes from one round of translation to another. The polypeptide is Ribosome-recycling factor (Staphylococcus saprophyticus subsp. saprophyticus (strain ATCC 15305 / DSM 20229 / NCIMB 8711 / NCTC 7292 / S-41)).